Reading from the N-terminus, the 565-residue chain is Sulfite reductase [NADPH] hemoprotein beta-component (565 aa).

Positions 429, 435, 474, and 478 each coordinate [4Fe-4S] cluster. Cys-478 contributes to the siroheme binding site.

It belongs to the nitrite and sulfite reductase 4Fe-4S domain family. As to quaternary structure, alpha(8)-beta(8). The alpha component is a flavoprotein, the beta component is a hemoprotein. The cofactor is siroheme. Requires [4Fe-4S] cluster as cofactor.

It carries out the reaction hydrogen sulfide + 3 NADP(+) + 3 H2O = sulfite + 3 NADPH + 4 H(+). Its pathway is sulfur metabolism; hydrogen sulfide biosynthesis; hydrogen sulfide from sulfite (NADPH route): step 1/1. Functionally, component of the sulfite reductase complex that catalyzes the 6-electron reduction of sulfite to sulfide. This is one of several activities required for the biosynthesis of L-cysteine from sulfate. This Shewanella sp. (strain W3-18-1) protein is Sulfite reductase [NADPH] hemoprotein beta-component.